The chain runs to 426 residues: Zinc finger CCCH domain-containing protein 15 (426 aa).

The span at 1 to 12 (MPPKKQAQAGGS) shows a compositional bias: low complexity. Disordered regions lie at residues 1–30 (MPPK…KTFG) and 53–74 (GQQN…KDDK). Residues 13 to 29 (KKAEQKKKEKIIEDKTF) show a composition bias toward basic and acidic residues. Residues 53–62 (GQQNPRQVAQ) are compositionally biased toward polar residues. Residues 61–86 (AQSEAEKKLKKDDKKKELQELNELFK) are a coiled coil. The segment covering 64 to 74 (EAEKKLKKDDK) has biased composition (basic and acidic residues). C3H1-type zinc fingers lie at residues 99-126 (DPKS…HDLT) and 174-212 (PKTQ…HALP). A coiled-coil region spans residues 218–285 (KKDKKKEEKE…RRKADFKAGK (68 aa)). A Phosphoserine modification is found at serine 231. The segment at 236-260 (IERERSALGPNVTKITLESFLAWKK) is required for interaction with DRG1. The segment at 299–326 (PELVNDDDEEADDTRYTQGTGGDEVDDS) is disordered. Serine 351, serine 360, and serine 381 each carry phosphoserine. The disordered stretch occupies residues 358–411 (YTSDKDENKLSEASGGRAENGERSDLEEDNEREGTENGAIDAVPVDENLFTGED).

Belongs to the ZC3H15/TMA46 family. Interacts with DRG1; this interaction prevents DRG1 poly-ubiquitination and degradation by proteasome. DRG1-ZC3H15/DFRP1 complex co-sediments with polysomes. Associates with microtubules.

It is found in the cytoplasm. The protein resides in the nucleus. Functionally, protects DRG1 from proteolytic degradation. Stimulates DRG1 GTPase activity likely by increasing the affinity for the potassium ions. This chain is Zinc finger CCCH domain-containing protein 15 (ZC3H15), found in Homo sapiens (Human).